The primary structure comprises 347 residues: UPF0284 protein LS215_0030 (347 aa).

This sequence belongs to the UPF0284 family.

This chain is UPF0284 protein LS215_0030, found in Saccharolobus islandicus (strain L.S.2.15 / Lassen #1) (Sulfolobus islandicus).